The following is a 428-amino-acid chain: uncharacterized protein (428 aa).

The Glutaredoxin domain occupies 241 to 351 (KEEEEQSVGK…KLLGGCERVE (111 aa)). The span at 386-401 (EDDDDDDDEGDDDESV) shows a compositional bias: acidic residues. Positions 386 to 405 (EDDDDDDDEGDDDESVKEER) are disordered.

This is an uncharacterized protein from Arabidopsis thaliana (Mouse-ear cress).